We begin with the raw amino-acid sequence, 299 residues long: Bifunctional protein FolD (299 aa).

Residues 168-170, Ser-193, and Ile-234 contribute to the NADP(+) site; that span reads GRS.

Belongs to the tetrahydrofolate dehydrogenase/cyclohydrolase family. Homodimer.

It catalyses the reaction (6R)-5,10-methylene-5,6,7,8-tetrahydrofolate + NADP(+) = (6R)-5,10-methenyltetrahydrofolate + NADPH. It carries out the reaction (6R)-5,10-methenyltetrahydrofolate + H2O = (6R)-10-formyltetrahydrofolate + H(+). Its pathway is one-carbon metabolism; tetrahydrofolate interconversion. Its function is as follows. Catalyzes the oxidation of 5,10-methylenetetrahydrofolate to 5,10-methenyltetrahydrofolate and then the hydrolysis of 5,10-methenyltetrahydrofolate to 10-formyltetrahydrofolate. The sequence is that of Bifunctional protein FolD from Rhizobium johnstonii (strain DSM 114642 / LMG 32736 / 3841) (Rhizobium leguminosarum bv. viciae).